The primary structure comprises 176 residues: HTH-type transcriptional regulator DctR (176 aa).

The region spanning 109-174 (VPEANVSLSR…ELVRHQHIDY (66 aa)) is the HTH luxR-type domain. Positions 133–152 (TEDILEKLKISLKTFYCHKH) form a DNA-binding region, H-T-H motif.

Its function is as follows. May act as a transcriptional regulator of dctA. The polypeptide is HTH-type transcriptional regulator DctR (dctR) (Shigella flexneri).